The primary structure comprises 288 residues: Nickel/cobalt efflux system RcnA (288 aa).

Residues 1–12 (MGEFSTLLQQGN) are Periplasmic-facing. The helical transmembrane segment at 13–33 (AWFFIPSAILLGVLHGLEPGH) threads the bilayer. At 34 to 51 (SKTMMAAFIIAIKGTIKQ) the chain is on the cytoplasmic side. A helical membrane pass occupies residues 52 to 72 (AVMLGLAATLSHTAVVWLIAL). Topologically, residues 73 to 85 (GGMYVSRAFTAES) are periplasmic. The chain crosses the membrane as a helical span at residues 86-106 (VEPWLQLVSAIIILSTAFWMF). Topologically, residues 107 to 188 (WRTWKGERDG…FHDREVTNGQ (82 aa)) are cytoplasmic. Over residues 125-137 (THHHHDHEHHHHD) the composition is skewed to basic residues. Positions 125 to 144 (THHHHDHEHHHHDHDHDHHH) are disordered. Residues 189-209 (ILLFGLTGGLIPCPAAITVLL) traverse the membrane as a helical segment. The Periplasmic segment spans residues 210 to 223 (ICIQLKAFTLGATM). Residues 224–244 (VLCFSIGLALTLVAVGVGAAI) traverse the membrane as a helical segment. Residues 245 to 266 (SVQQAAKRWSGFNTLARKAPYF) are Cytoplasmic-facing. Residues 267–287 (SSILIGLVGLYMGMHGYLGII) form a helical membrane-spanning segment. Residue R288 is a topological domain, periplasmic.

This sequence belongs to the NiCoT transporter (TC 2.A.52) family. RcnA subfamily.

It is found in the cell inner membrane. Functionally, efflux system for nickel and cobalt. The sequence is that of Nickel/cobalt efflux system RcnA (rcnA) from Citrobacter koseri (strain ATCC BAA-895 / CDC 4225-83 / SGSC4696).